Here is a 329-residue protein sequence, read N- to C-terminus: Beta-ketoacyl-[acyl-carrier-protein] synthase III (329 aa).

Residues Cys-113 and His-255 contribute to the active site. Positions 256-260 (QANQR) are ACP-binding. Residue Asn-285 is part of the active site.

This sequence belongs to the thiolase-like superfamily. FabH family. In terms of assembly, homodimer.

The protein resides in the cytoplasm. It catalyses the reaction malonyl-[ACP] + acetyl-CoA + H(+) = 3-oxobutanoyl-[ACP] + CO2 + CoA. It participates in lipid metabolism; fatty acid biosynthesis. Functionally, catalyzes the condensation reaction of fatty acid synthesis by the addition to an acyl acceptor of two carbons from malonyl-ACP. Catalyzes the first condensation reaction which initiates fatty acid synthesis and may therefore play a role in governing the total rate of fatty acid production. Possesses both acetoacetyl-ACP synthase and acetyl transacylase activities. Its substrate specificity determines the biosynthesis of branched-chain and/or straight-chain of fatty acids. The chain is Beta-ketoacyl-[acyl-carrier-protein] synthase III from Chlorobium luteolum (strain DSM 273 / BCRC 81028 / 2530) (Pelodictyon luteolum).